Reading from the N-terminus, the 218-residue chain is 3-phospho-D-glycerate guanylyltransferase (218 aa).

This sequence belongs to the CofC family.

It catalyses the reaction (2R)-3-phosphoglycerate + GTP + H(+) = 3-[(R)-glyceryl]-diphospho-5'-guanosine + diphosphate. It functions in the pathway cofactor biosynthesis; coenzyme F420 biosynthesis. Functionally, guanylyltransferase that catalyzes the activation of (2R)-3-phosphoglycerate (3PG) as 3-[(R)-glyceryl]-diphospho-5'-guanosine, via the condensation of 3PG with GTP. It is involved in the biosynthesis of a derivative of the hydride carrier cofactor coenzyme F420, 3PG-F420. The sequence is that of 3-phospho-D-glycerate guanylyltransferase from Phenylobacterium zucineum (strain HLK1).